The chain runs to 540 residues: Chaperonin GroEL (540 aa).

ATP contacts are provided by residues 29–32 (TLGP), 86–90 (DGTTT), Gly413, 476–478 (NAA), and Asp492.

Belongs to the chaperonin (HSP60) family. In terms of assembly, forms a cylinder of 14 subunits composed of two heptameric rings stacked back-to-back. Interacts with the co-chaperonin GroES.

It is found in the cytoplasm. The enzyme catalyses ATP + H2O + a folded polypeptide = ADP + phosphate + an unfolded polypeptide.. In terms of biological role, together with its co-chaperonin GroES, plays an essential role in assisting protein folding. The GroEL-GroES system forms a nano-cage that allows encapsulation of the non-native substrate proteins and provides a physical environment optimized to promote and accelerate protein folding. In Streptococcus pneumoniae (strain P1031), this protein is Chaperonin GroEL.